A 285-amino-acid chain; its full sequence is Tryptophan synthase alpha chain (285 aa).

Catalysis depends on proton acceptor residues Glu-53 and Asp-64.

This sequence belongs to the TrpA family. Tetramer of two alpha and two beta chains.

It catalyses the reaction (1S,2R)-1-C-(indol-3-yl)glycerol 3-phosphate + L-serine = D-glyceraldehyde 3-phosphate + L-tryptophan + H2O. It participates in amino-acid biosynthesis; L-tryptophan biosynthesis; L-tryptophan from chorismate: step 5/5. Functionally, the alpha subunit is responsible for the aldol cleavage of indoleglycerol phosphate to indole and glyceraldehyde 3-phosphate. The protein is Tryptophan synthase alpha chain of Bordetella parapertussis (strain 12822 / ATCC BAA-587 / NCTC 13253).